Here is a 438-residue protein sequence, read N- to C-terminus: Adenosylhomocysteinase (438 aa).

Thr-61, Asp-137, and Glu-162 together coordinate substrate. 163–165 contributes to the NAD(+) binding site; it reads TTT. 2 residues coordinate substrate: Lys-192 and Asp-196. NAD(+) contacts are provided by residues Asn-197, 226–231, Glu-249, Asn-284, 305–307, and Asn-352; these read GYGDVG and IGH.

This sequence belongs to the adenosylhomocysteinase family. The cofactor is NAD(+).

The protein resides in the cytoplasm. The enzyme catalyses S-adenosyl-L-homocysteine + H2O = L-homocysteine + adenosine. Its pathway is amino-acid biosynthesis; L-homocysteine biosynthesis; L-homocysteine from S-adenosyl-L-homocysteine: step 1/1. In terms of biological role, may play a key role in the regulation of the intracellular concentration of adenosylhomocysteine. The protein is Adenosylhomocysteinase of Flavobacterium johnsoniae (strain ATCC 17061 / DSM 2064 / JCM 8514 / BCRC 14874 / CCUG 350202 / NBRC 14942 / NCIMB 11054 / UW101) (Cytophaga johnsonae).